A 143-amino-acid chain; its full sequence is Peptide methionine sulfoxide reductase B9 (143 aa).

The MsrB domain occupies 19-140 (DQDWRAILSP…NSVSLKFSEI (122 aa)). Cys-58, Cys-61, Cys-104, and Cys-107 together coordinate Zn(2+). Cys-76 and Cys-129 are oxidised to a cystine. Cys-129 (nucleophile) is an active-site residue.

Belongs to the MsrB Met sulfoxide reductase family. Zn(2+) serves as cofactor.

Its subcellular location is the cytoplasm. The protein localises to the cytosol. It carries out the reaction L-methionyl-[protein] + [thioredoxin]-disulfide + H2O = L-methionyl-(R)-S-oxide-[protein] + [thioredoxin]-dithiol. Its function is as follows. Catalyzes the reduction of methionine sulfoxide (MetSO) to methionine in proteins. Plays a protective role against oxidative stress by restoring activity to proteins that have been inactivated by methionine oxidation. MSRB family specifically reduces the MetSO R-enantiomer. This chain is Peptide methionine sulfoxide reductase B9 (MSRB9), found in Arabidopsis thaliana (Mouse-ear cress).